Consider the following 41-residue polypeptide: Large ribosomal subunit protein bL36 (41 aa).

Belongs to the bacterial ribosomal protein bL36 family.

The protein is Large ribosomal subunit protein bL36 of Maricaulis maris (strain MCS10) (Caulobacter maris).